The following is an 829-amino-acid chain: DNA ligase (829 aa).

The tract at residues 1-23 (MPAQTSRARPVEEMTAAQAREAH) is disordered. Residues 47–51 (DAEYD), 96–97 (SL), and Glu-130 each bind NAD(+). Lys-132 acts as the N6-AMP-lysine intermediate in catalysis. 4 residues coordinate NAD(+): Arg-153, Glu-190, Lys-306, and Lys-330. Zn(2+) contacts are provided by Cys-453, Cys-456, Cys-477, and Cys-483. Positions 750–829 (AAAAVFSGQT…AEWLAMVEAA (80 aa)) constitute a BRCT domain.

It belongs to the NAD-dependent DNA ligase family. LigA subfamily. The cofactor is Mg(2+). It depends on Mn(2+) as a cofactor.

It carries out the reaction NAD(+) + (deoxyribonucleotide)n-3'-hydroxyl + 5'-phospho-(deoxyribonucleotide)m = (deoxyribonucleotide)n+m + AMP + beta-nicotinamide D-nucleotide.. Its function is as follows. DNA ligase that catalyzes the formation of phosphodiester linkages between 5'-phosphoryl and 3'-hydroxyl groups in double-stranded DNA using NAD as a coenzyme and as the energy source for the reaction. It is essential for DNA replication and repair of damaged DNA. The chain is DNA ligase from Methylobacterium nodulans (strain LMG 21967 / CNCM I-2342 / ORS 2060).